The following is a 406-amino-acid chain: MSQPITRENFDEWMIPVYAPAPFIPVRGEGSRLWDQQGKEYIDFAGGIAVNALGHAHPELREALNEQASKFWHTGNGYTNEPVLRLAKKLIDATFADRVFFCNSGAEANEAALKLARKFAHDRYGSHKSGIVAFKNAFHGRTLFTVSAGGQPAYSQDFAPLPPDIRHAAYNDINSASALIDDATCAVIVEPIQGEGGVVPASNAFLQGLRELCDRHNALLIFDEVQTGVGRTGELYAYMHYGVTPDLLTTAKALGGGFPVGALLTTEECASVMTVGTHGTTYGGNPLASAVAGKVLELINTPEMLNGVKQRHDWFVERLNTINHRYGLFSEVRGLGLLIGCVLNADYAGQAKQISQEAAKAGVMVLIAGGNVVRFAPALNVSEEEVTTGLDRFAAACEHFVSRGSS.

Lys252 is subject to N6-(pyridoxal phosphate)lysine.

Belongs to the class-III pyridoxal-phosphate-dependent aminotransferase family. AstC subfamily. Pyridoxal 5'-phosphate serves as cofactor.

The enzyme catalyses N(2)-succinyl-L-ornithine + 2-oxoglutarate = N-succinyl-L-glutamate 5-semialdehyde + L-glutamate. The protein operates within amino-acid degradation; L-arginine degradation via AST pathway; L-glutamate and succinate from L-arginine: step 3/5. Catalyzes the transamination of N(2)-succinylornithine and alpha-ketoglutarate into N(2)-succinylglutamate semialdehyde and glutamate. Can also act as an acetylornithine aminotransferase. This is Succinylornithine transaminase from Shigella sonnei (strain Ss046).